The chain runs to 267 residues: 4-hydroxy-tetrahydrodipicolinate reductase (267 aa).

Residues 8-13 (GAAGRM), E34, 98-100 (GST), and 122-125 (APNM) contribute to the NAD(+) site. H155 acts as the Proton donor/acceptor in catalysis. H156 is a binding site for (S)-2,3,4,5-tetrahydrodipicolinate. K159 acts as the Proton donor in catalysis. (S)-2,3,4,5-tetrahydrodipicolinate is bound at residue 165–166 (GT).

It belongs to the DapB family.

The protein resides in the cytoplasm. It carries out the reaction (S)-2,3,4,5-tetrahydrodipicolinate + NAD(+) + H2O = (2S,4S)-4-hydroxy-2,3,4,5-tetrahydrodipicolinate + NADH + H(+). The enzyme catalyses (S)-2,3,4,5-tetrahydrodipicolinate + NADP(+) + H2O = (2S,4S)-4-hydroxy-2,3,4,5-tetrahydrodipicolinate + NADPH + H(+). The protein operates within amino-acid biosynthesis; L-lysine biosynthesis via DAP pathway; (S)-tetrahydrodipicolinate from L-aspartate: step 4/4. Catalyzes the conversion of 4-hydroxy-tetrahydrodipicolinate (HTPA) to tetrahydrodipicolinate. This chain is 4-hydroxy-tetrahydrodipicolinate reductase, found in Syntrophotalea carbinolica (strain DSM 2380 / NBRC 103641 / GraBd1) (Pelobacter carbinolicus).